A 946-amino-acid polypeptide reads, in one-letter code: Bifunctional glutamine synthetase adenylyltransferase/adenylyl-removing enzyme (946 aa).

The segment at 1–440 (MKPLSSPLQQ…VFNELIGDDE (440 aa)) is adenylyl removase. The segment at 449–946 (SEQWRELWQD…VSWQKWLVEE (498 aa)) is adenylyl transferase.

It belongs to the GlnE family. It depends on Mg(2+) as a cofactor.

The enzyme catalyses [glutamine synthetase]-O(4)-(5'-adenylyl)-L-tyrosine + phosphate = [glutamine synthetase]-L-tyrosine + ADP. It carries out the reaction [glutamine synthetase]-L-tyrosine + ATP = [glutamine synthetase]-O(4)-(5'-adenylyl)-L-tyrosine + diphosphate. Involved in the regulation of glutamine synthetase GlnA, a key enzyme in the process to assimilate ammonia. When cellular nitrogen levels are high, the C-terminal adenylyl transferase (AT) inactivates GlnA by covalent transfer of an adenylyl group from ATP to specific tyrosine residue of GlnA, thus reducing its activity. Conversely, when nitrogen levels are low, the N-terminal adenylyl removase (AR) activates GlnA by removing the adenylyl group by phosphorolysis, increasing its activity. The regulatory region of GlnE binds the signal transduction protein PII (GlnB) which indicates the nitrogen status of the cell. The polypeptide is Bifunctional glutamine synthetase adenylyltransferase/adenylyl-removing enzyme (Escherichia coli (strain SMS-3-5 / SECEC)).